Here is a 1938-residue protein sequence, read N- to C-terminus: Myosin-13 (1938 aa).

Positions 33–82 (DSKKACFVADNKEMYVKGMIQTRENDKVIVKTLDDRMLTLNNDQVFPMNP) constitute a Myosin N-terminal SH3-like domain. In terms of domain architecture, Myosin motor spans 86-782 (DKIEDMAMMT…LLGLLEEMRD (697 aa)). Position 130 is an N6,N6,N6-trimethyllysine (K130). 179-186 (GESGAGKT) serves as a coordination point for ATP. 2 actin-binding regions span residues 659 to 681 (LNKLMTNLRSTHPHFVRCLIPNE) and 761 to 775 (RFGNTKVFFKAGLLG). The IQ domain occupies 785 to 814 (LVTLMTSTQAVCRGYLMRVEFKKMMERRDS). Positions 843–1938 (LLKSAEAEKE…RDVGSQKMEE (1096 aa)) form a coiled coil. Positions 1917-1938 (AESQVNKLRAKSRDVGSQKMEE) are disordered. The span at 1927-1938 (KSRDVGSQKMEE) shows a compositional bias: basic and acidic residues.

Belongs to the TRAFAC class myosin-kinesin ATPase superfamily. Myosin family. Muscle myosin is a hexameric protein that consists of 2 heavy chain subunits (MHC), 2 alkali light chain subunits (MLC) and 2 regulatory light chain subunits (MLC-2). As to expression, specifically expressed in extraocular and laryngeal muscles.

Its subcellular location is the cytoplasm. It localises to the myofibril. Functionally, fast twitching myosin mediating the high-velocity and low-tension contractions of specific striated muscles. The polypeptide is Myosin-13 (MYH13) (Homo sapiens (Human)).